The primary structure comprises 179 residues: Large ribosomal subunit protein uL5 (179 aa).

The protein belongs to the universal ribosomal protein uL5 family. In terms of assembly, part of the 50S ribosomal subunit; part of the 5S rRNA/L5/L18/L25 subcomplex. Contacts the 5S rRNA and the P site tRNA. Forms a bridge to the 30S subunit in the 70S ribosome.

Its function is as follows. This is one of the proteins that bind and probably mediate the attachment of the 5S RNA into the large ribosomal subunit, where it forms part of the central protuberance. In the 70S ribosome it contacts protein S13 of the 30S subunit (bridge B1b), connecting the 2 subunits; this bridge is implicated in subunit movement. Contacts the P site tRNA; the 5S rRNA and some of its associated proteins might help stabilize positioning of ribosome-bound tRNAs. The chain is Large ribosomal subunit protein uL5 from Agathobacter rectalis (strain ATCC 33656 / DSM 3377 / JCM 17463 / KCTC 5835 / VPI 0990) (Eubacterium rectale).